The primary structure comprises 410 residues: Diguanylate cyclase DgcM (410 aa).

PAS domains lie at 3–70 (THNF…NQHD) and 129–198 (GFYA…HLPG). In terms of domain architecture, PAC spans 199–251 (GHKPLNFIHKLADGSTRHVQTYAGPIEIYGDKLMLCIVHDITEQKRLEEQLEH). Residues 283 to 410 (QDYSLLLIDT…NDGRNRVLAA (128 aa)) form the GGDEF domain. A Mg(2+)-binding site is contributed by Asp-291. Positions 299, 304, and 308 each coordinate substrate. Glu-334 contacts Mg(2+). Glu-334 serves as the catalytic Proton acceptor.

Mg(2+) is required as a cofactor.

It catalyses the reaction 2 GTP = 3',3'-c-di-GMP + 2 diphosphate. It participates in purine metabolism; 3',5'-cyclic di-GMP biosynthesis. Functionally, part of a signaling cascade that regulates curli biosynthesis. The cascade is composed of two cyclic-di-GMP (c-di-GMP) control modules, in which c-di-GMP controlled by the DgcE/PdeH pair (module I) regulates the activity of the DgcM/PdeR pair (module II), which in turn regulates activity of the transcription factor MlrA and expression of the master biofilm regulator csgD. This chain is Diguanylate cyclase DgcM, found in Escherichia coli O157:H7.